We begin with the raw amino-acid sequence, 67 residues long: UPF0435 protein SSP0913 (67 aa).

The protein belongs to the UPF0435 family.

The protein is UPF0435 protein SSP0913 of Staphylococcus saprophyticus subsp. saprophyticus (strain ATCC 15305 / DSM 20229 / NCIMB 8711 / NCTC 7292 / S-41).